A 64-amino-acid polypeptide reads, in one-letter code: Putative antitoxin VapB1 (64 aa).

Possibly the antitoxin component of a type II toxin-antitoxin (TA) system. Its cognate toxin is VapC1 (Potential). This Methanocaldococcus jannaschii (strain ATCC 43067 / DSM 2661 / JAL-1 / JCM 10045 / NBRC 100440) (Methanococcus jannaschii) protein is Putative antitoxin VapB1 (vapB1).